The chain runs to 234 residues: 2,3,4,5-tetrahydropyridine-2,6-dicarboxylate N-acetyltransferase (234 aa).

The protein belongs to the transferase hexapeptide repeat family. DapH subfamily.

The catalysed reaction is (S)-2,3,4,5-tetrahydrodipicolinate + acetyl-CoA + H2O = L-2-acetamido-6-oxoheptanedioate + CoA. It participates in amino-acid biosynthesis; L-lysine biosynthesis via DAP pathway; LL-2,6-diaminopimelate from (S)-tetrahydrodipicolinate (acetylase route): step 1/3. Functionally, catalyzes the transfer of an acetyl group from acetyl-CoA to tetrahydrodipicolinate. The polypeptide is 2,3,4,5-tetrahydropyridine-2,6-dicarboxylate N-acetyltransferase (Leuconostoc citreum (strain KM20)).